We begin with the raw amino-acid sequence, 312 residues long: Olfactory receptor 5J2 (312 aa).

Residues Met1 to Ala25 are Extracellular-facing. Asn5 carries an N-linked (GlcNAc...) asparagine glycan. A helical membrane pass occupies residues Val26–Ile46. The Cytoplasmic segment spans residues Leu47–Lys54. The chain crosses the membrane as a helical span at residues Leu55 to Ser75. Residues Ala76–Val99 are Extracellular-facing. Cys97 and Cys189 are oxidised to a cystine. A helical membrane pass occupies residues Gln100 to Tyr120. Topologically, residues Asp121–Arg139 are cytoplasmic. A helical transmembrane segment spans residues Lys140–Thr160. Residues Ile161–Glu196 are Extracellular-facing. Residues Leu197 to Ser217 form a helical membrane-spanning segment. Residues Tyr218–Ala237 lie on the Cytoplasmic side of the membrane. The chain crosses the membrane as a helical span at residues Phe238–Ser258. The Extracellular segment spans residues Tyr259 to Glu271. A helical transmembrane segment spans residues Lys272–Leu292. Topologically, residues Arg293–Cys312 are cytoplasmic.

The protein belongs to the G-protein coupled receptor 1 family.

The protein resides in the cell membrane. Functionally, odorant receptor. This Homo sapiens (Human) protein is Olfactory receptor 5J2 (OR5J2).